Consider the following 210-residue polypeptide: Ribosomal RNA small subunit methyltransferase G (210 aa).

Residues Gly-76, Leu-81, 127–128 (VE), and Arg-142 contribute to the S-adenosyl-L-methionine site.

The protein belongs to the methyltransferase superfamily. RNA methyltransferase RsmG family.

It localises to the cytoplasm. It catalyses the reaction guanosine(527) in 16S rRNA + S-adenosyl-L-methionine = N(7)-methylguanosine(527) in 16S rRNA + S-adenosyl-L-homocysteine. Its function is as follows. Specifically methylates the N7 position of guanine in position 527 of 16S rRNA. The sequence is that of Ribosomal RNA small subunit methyltransferase G from Vibrio cholerae serotype O1 (strain ATCC 39541 / Classical Ogawa 395 / O395).